Reading from the N-terminus, the 136-residue chain is MSALVYFSSSSENTHRFMQRLGLPATRIPLNERERIRVDEPYILVVPSYGGGGMAGAVPRQVIRFLNDEHNRARIRGVIASGNRNFGDAWGCAGDVIAQKYGVPWLYRFELMGTQRDIDNVRRGVNEFWQQLPRSA.

It belongs to the NrdI family.

Functionally, probably involved in ribonucleotide reductase function. In Salmonella paratyphi A (strain ATCC 9150 / SARB42), this protein is Protein NrdI.